Consider the following 664-residue polypeptide: RNA-binding protein RMD9, mitochondrial (664 aa).

A mitochondrion-targeting transit peptide spans 1–32 (MFRLVQQQTLKSRVPNQFVSASRNSLNSQFRF). The tract at residues 38–68 (LERNPQQDPTTAAPAKSSSDKRNSKKKYENN) is disordered. Basic and acidic residues predominate over residues 55–68 (SSDKRNSKKKYENN).

It belongs to the RMD9 family. In terms of assembly, monomer. Phosphorylated. Phosphorylation promotes binding to RNA.

The protein resides in the mitochondrion inner membrane. Binds the 3'-UTR of mitochondrial mRNAs. Involved in the processing or stability of mitochondrial mRNAs. The sequence is that of RNA-binding protein RMD9, mitochondrial (RMD9) from Kluyveromyces lactis (strain ATCC 8585 / CBS 2359 / DSM 70799 / NBRC 1267 / NRRL Y-1140 / WM37) (Yeast).